The following is a 121-amino-acid chain: Large ribosomal subunit protein uL14 (121 aa).

It belongs to the universal ribosomal protein uL14 family. Part of the 50S ribosomal subunit. Forms a cluster with proteins L3 and L19. In the 70S ribosome, L14 and L19 interact and together make contacts with the 16S rRNA in bridges B5 and B8.

Binds to 23S rRNA. Forms part of two intersubunit bridges in the 70S ribosome. The chain is Large ribosomal subunit protein uL14 from Mycoplasmopsis synoviae (strain 53) (Mycoplasma synoviae).